Consider the following 267-residue polypeptide: Trehalose 2-sulfotransferase (267 aa).

Residues Q14, 33–39 (EPQEFFQ), P48, and W53 each bind alpha,alpha-trehalose. The active-site Proton acceptor is E36.

It belongs to the Stf0 sulfotransferase family. Homodimer.

It catalyses the reaction alpha,alpha-trehalose + 3'-phosphoadenylyl sulfate = 2-O-sulfo-alpha,alpha-trehalose + adenosine 3',5'-bisphosphate + H(+). It functions in the pathway glycolipid metabolism. Catalyzes the sulfuryl group transfer from 3'-phosphoadenosine-5'-phosphosulfate (PAPS) to trehalose, leading to trehalose-2-sulfate (T2S). The sulfation of trehalose is the first step in the biosynthesis of sulfolipid-1 (SL-1), a major cell wall glycolipid and the most abundant sulfated metabolite found in Mycobacterium tuberculosis, that is a potential virulence factor thought to mediate host-pathogen interactions. The sequence is that of Trehalose 2-sulfotransferase from Mycobacterium tuberculosis (strain ATCC 35801 / TMC 107 / Erdman).